Here is a 589-residue protein sequence, read N- to C-terminus: UvrABC system protein C (589 aa).

One can recognise a GIY-YIG domain in the interval 13-90 (PNPGCYLFKN…IKTHTPKYNF (78 aa)). The 36-residue stretch at 194-229 (KDILKKLHHLMQKASEKMFYEKAQEYRDIIDSIKQT) folds into the UVR domain.

This sequence belongs to the UvrC family. Interacts with UvrB in an incision complex.

The protein localises to the cytoplasm. In terms of biological role, the UvrABC repair system catalyzes the recognition and processing of DNA lesions. UvrC both incises the 5' and 3' sides of the lesion. The N-terminal half is responsible for the 3' incision and the C-terminal half is responsible for the 5' incision. The polypeptide is UvrABC system protein C (Aster yellows witches'-broom phytoplasma (strain AYWB)).